The sequence spans 227 residues: Ubiquitin-conjugating enzyme E2 6 (227 aa).

Over 1-206 the chain is Cytoplasmic; that stretch reads MASKGAYKRL…NSKQSWVKSR (206 aa). Residues 5–163 enclose the UBC core domain; that stretch reads GAYKRLMKEY…FPELIDKNRE (159 aa). Cysteine 87 acts as the Glycyl thioester intermediate in catalysis. Residues 207 to 225 form a helical membrane-spanning segment; the sequence is WSIAVLVFFALALARFFGA.

This sequence belongs to the ubiquitin-conjugating enzyme family.

The protein localises to the endoplasmic reticulum membrane. It carries out the reaction S-ubiquitinyl-[E1 ubiquitin-activating enzyme]-L-cysteine + [E2 ubiquitin-conjugating enzyme]-L-cysteine = [E1 ubiquitin-activating enzyme]-L-cysteine + S-ubiquitinyl-[E2 ubiquitin-conjugating enzyme]-L-cysteine.. Its pathway is protein modification; protein ubiquitination. Its function is as follows. Catalyzes the covalent attachment of ubiquitin to other proteins. Functions in degradation of misfolded or regulated proteins localized in the endoplasmic reticulum (ER) lumen or membrane via the ubiquitin-proteasome system. Cognate E2 conjugating enzyme for the doa10 ubiquitin ligase complex, which is part of the ERAD-C pathway responsible for the rapid degradation of membrane proteins with misfolded cytoplasmic domains. The chain is Ubiquitin-conjugating enzyme E2 6 (ubc6) from Schizosaccharomyces pombe (strain 972 / ATCC 24843) (Fission yeast).